Reading from the N-terminus, the 469-residue chain is Desmin (469 aa).

The segment at 2–107 is head; that stretch reads SQAYSSSQRV…QEFLTTRTNE (106 aa). Ser-7 bears the Phosphoserine; by CDK1 mark. A Phosphoserine; by AURKB modification is found at Ser-12. Arg-16 is modified (omega-N-methylarginine). The residue at position 17 (Thr-17) is a Phosphothreonine; by AURKB and ROCK1. Phosphoserine; by CDK1 occurs at positions 28 and 32. Arg-37 bears the Asymmetric dimethylarginine; alternate mark. Residue Arg-37 is modified to Omega-N-methylarginine; alternate. A Phosphoserine modification is found at Ser-45. The residue at position 58 (Arg-58) is an ADP-ribosylarginine. Position 60 is a phosphoserine; by AURKB (Ser-60). Arg-70 carries the omega-N-methylarginine modification. A Phosphothreonine; by ROCK1 modification is found at Thr-76. Position 81 is a phosphoserine (Ser-81). The 309-residue stretch at 107–415 folds into the IF rod domain; it reads EKVELQELND…KLLEGEESRI (309 aa). A coil 1A region spans residues 108-140; it reads KVELQELNDRFANYIEKVRFLEQQNAALAAEVN. Residues 141–150 are linker 1; it reads RLKGREPTRV. A coil 1B region spans residues 151–251; sequence AEIYEEELRE…HEEEIRELQA (101 aa). The segment at 252 to 267 is linker 12; the sequence is QLQEQQVQVEMDMSKP. The tract at residues 267–414 is interaction with NEB; that stretch reads PDLTAALRDI…RKLLEGEESR (148 aa). Positions 268–286 are coil 2A; the sequence is DLTAALRDIRAQYETIAAK. The linker 2 stretch occupies residues 287 to 294; sequence NISEAEEW. Phosphoserine is present on residues Ser-289, Ser-357, Ser-360, and Ser-423. The coil 2B stretch occupies residues 295 to 411; it reads YKSKVSDLTQ…ATYRKLLEGE (117 aa). The segment at 412–469 is tail; the sequence is ESRINLPIQTYSALNFRETSPEQRGSEVHTKKTVMIKTIETRDGEVVSEATQQQHEVL. Positions 437–452 are interaction with CRYAB; the sequence is SEVHTKKTVMIKTIET.

It belongs to the intermediate filament family. Homomer. Interacts with DST. Interacts with MTM1. Interacts with EPPK1; interaction is dependent of higher-order structure of intermediate filament. Interacts with CRYAB. Interacts with NEB (via nebulin repeats 160-164). Interacts (via rod region) with NEBL (via nebulin repeats 1-5). Interacts with ASB2; the interaction targets DES for proteasomal degradation. Interacts with PKP1. Interacts with FLII. In terms of processing, ADP-ribosylation prevents ability to form intermediate filaments. Post-translationally, phosphorylation at Ser-7, Ser-28 and Ser-32 by CDK1, phosphorylation at Ser-60 by AURKB and phosphorylation at Thr-76 by ROCK1 contribute to efficient separation of desmin intermediate filaments during mitosis. Ubiquitination by a SCF-like complex containing ASB2 leads to proteasomal degradation.

The protein resides in the cytoplasm. Its subcellular location is the myofibril. The protein localises to the sarcomere. It is found in the z line. It localises to the cell membrane. The protein resides in the sarcolemma. Its subcellular location is the nucleus. The protein localises to the cell tip. It is found in the nucleus envelope. In terms of biological role, muscle-specific type III intermediate filament essential for proper muscular structure and function. Plays a crucial role in maintaining the structure of sarcomeres, inter-connecting the Z-disks and forming the myofibrils, linking them not only to the sarcolemmal cytoskeleton, but also to the nucleus and mitochondria, thus providing strength for the muscle fiber during activity. In adult striated muscle they form a fibrous network connecting myofibrils to each other and to the plasma membrane from the periphery of the Z-line structures. May act as a sarcomeric microtubule-anchoring protein: specifically associates with detyrosinated tubulin-alpha chains, leading to buckled microtubules and mechanical resistance to contraction. Required for nuclear membrane integrity, via anchoring at the cell tip and nuclear envelope, resulting in maintenance of microtubule-derived intracellular mechanical forces. Contributes to the transcriptional regulation of the NKX2-5 gene in cardiac progenitor cells during a short period of cardiomyogenesis and in cardiac side population stem cells in the adult. Plays a role in maintaining an optimal conformation of nebulette (NEB) on heart muscle sarcomeres to bind and recruit cardiac alpha-actin. In Canis lupus familiaris (Dog), this protein is Desmin (DES).